We begin with the raw amino-acid sequence, 33 residues long: Ice-structuring protein SS-3 (33 aa).

The protein belongs to the type-I AFP family.

Antifreeze proteins lower the blood freezing point. The chain is Ice-structuring protein SS-3 from Myoxocephalus scorpius (Shorthorn sculpin).